The chain runs to 149 residues: 3-dehydroquinate dehydratase (149 aa).

Tyrosine 26 functions as the Proton acceptor in the catalytic mechanism. 3 residues coordinate substrate: asparagine 77, histidine 83, and aspartate 90. The Proton donor role is filled by histidine 103. Substrate is bound by residues 104-105 (LS) and arginine 114.

This sequence belongs to the type-II 3-dehydroquinase family. As to quaternary structure, homododecamer.

The catalysed reaction is 3-dehydroquinate = 3-dehydroshikimate + H2O. The protein operates within metabolic intermediate biosynthesis; chorismate biosynthesis; chorismate from D-erythrose 4-phosphate and phosphoenolpyruvate: step 3/7. In terms of biological role, catalyzes a trans-dehydration via an enolate intermediate. The polypeptide is 3-dehydroquinate dehydratase (aroQ) (Haemophilus influenzae (strain ATCC 51907 / DSM 11121 / KW20 / Rd)).